A 534-amino-acid polypeptide reads, in one-letter code: CTP synthase (534 aa).

Residues 1–268 (MSVKYIFVTG…AKIVCKRLGL (268 aa)) are amidoligase domain. A CTP-binding site is contributed by S14. A UTP-binding site is contributed by S14. 15-20 (GLGKGI) contributes to the ATP binding site. Y55 is an L-glutamine binding site. D72 serves as a coordination point for ATP. Residues D72 and E142 each coordinate Mg(2+). Residues 149–151 (DIE), 189–194 (KTKPTQ), and K225 contribute to the CTP site. UTP contacts are provided by residues 189–194 (KTKPTQ) and K225. The region spanning 293–534 (TIGLVGKYVE…VRAAYEYKTK (242 aa)) is the Glutamine amidotransferase type-1 domain. L-glutamine is bound at residue G355. C382 (nucleophile; for glutamine hydrolysis) is an active-site residue. L-glutamine contacts are provided by residues 383–386 (LGMQ), E406, and R462. Active-site residues include H507 and E509.

Belongs to the CTP synthase family. As to quaternary structure, homotetramer.

The catalysed reaction is UTP + L-glutamine + ATP + H2O = CTP + L-glutamate + ADP + phosphate + 2 H(+). It catalyses the reaction L-glutamine + H2O = L-glutamate + NH4(+). It carries out the reaction UTP + NH4(+) + ATP = CTP + ADP + phosphate + 2 H(+). The protein operates within pyrimidine metabolism; CTP biosynthesis via de novo pathway; CTP from UDP: step 2/2. Allosterically activated by GTP, when glutamine is the substrate; GTP has no effect on the reaction when ammonia is the substrate. The allosteric effector GTP functions by stabilizing the protein conformation that binds the tetrahedral intermediate(s) formed during glutamine hydrolysis. Inhibited by the product CTP, via allosteric rather than competitive inhibition. Functionally, catalyzes the ATP-dependent amination of UTP to CTP with either L-glutamine or ammonia as the source of nitrogen. Regulates intracellular CTP levels through interactions with the four ribonucleotide triphosphates. In Ruminiclostridium cellulolyticum (strain ATCC 35319 / DSM 5812 / JCM 6584 / H10) (Clostridium cellulolyticum), this protein is CTP synthase.